We begin with the raw amino-acid sequence, 368 residues long: Agmatine deiminase (368 aa).

C357 (amidino-cysteine intermediate) is an active-site residue.

Belongs to the agmatine deiminase family. As to quaternary structure, homodimer.

It catalyses the reaction agmatine + H2O = N-carbamoylputrescine + NH4(+). The protein operates within amine and polyamine biosynthesis; putrescine biosynthesis via agmatine pathway; N-carbamoylputrescine from agmatine: step 1/1. In terms of biological role, mediates the hydrolysis of agmatine into N-carbamoylputrescine in the arginine decarboxylase (ADC) pathway of putrescine biosynthesis, a basic polyamine. This chain is Agmatine deiminase, found in Pseudomonas syringae pv. syringae (strain B728a).